The chain runs to 785 residues: E3 UFM1-protein ligase 1 homolog (785 aa).

The span at 396 to 416 shows a compositional bias: basic and acidic residues; it reads MKHQDVIPDKESAENKADKRD. Positions 396–473 are disordered; sequence MKHQDVIPDK…KSAGGKKGAK (78 aa). The span at 439 to 449 shows a compositional bias: basic residues; sequence KSTKKHARGHR.

This sequence belongs to the UFL1 family.

In terms of biological role, E3 UFM1-protein ligase that mediates ufmylation of target proteins. This is E3 UFM1-protein ligase 1 homolog from Culex quinquefasciatus (Southern house mosquito).